Here is a 1278-residue protein sequence, read N- to C-terminus: Alpha-glucan water dikinase 2 (1278 aa).

Positions 1–23 (MATSKSQQFQLIEGMELQITVTG) are cleaved as a signal peptide. His-886 functions as the Tele-phosphohistidine intermediate in the catalytic mechanism.

Belongs to the PEP-utilizing enzyme family. In terms of assembly, homodimer. It depends on Mg(2+) as a cofactor.

The catalysed reaction is [(1-&gt;4)-alpha-D-glucosyl](n) + n ATP + n H2O = [(1-&gt;4)-6-phospho-alpha-D-glucosyl](n) + n AMP + n phosphate + 2n H(+). Its function is as follows. Mediates the incorporation of phosphate into alpha-glucan, mostly at the C-6 position of glucose units. The protein is Alpha-glucan water dikinase 2 (GWD2) of Arabidopsis thaliana (Mouse-ear cress).